Consider the following 156-residue polypeptide: Cyanate hydratase (156 aa).

Residues arginine 96, glutamate 99, and serine 122 contribute to the active site.

Belongs to the cyanase family.

The catalysed reaction is cyanate + hydrogencarbonate + 3 H(+) = NH4(+) + 2 CO2. Functionally, catalyzes the reaction of cyanate with bicarbonate to produce ammonia and carbon dioxide. The chain is Cyanate hydratase from Mycobacteroides abscessus (strain ATCC 19977 / DSM 44196 / CCUG 20993 / CIP 104536 / JCM 13569 / NCTC 13031 / TMC 1543 / L948) (Mycobacterium abscessus).